A 146-amino-acid chain; its full sequence is Cytochrome c-556 (146 aa).

A signal peptide spans 1 to 24 (MCMKLKTITAAMLFGCLCAGAVYA). Heme c is bound by residues methionine 35, cysteine 135, cysteine 138, and histidine 139.

As to quaternary structure, monomer. Binds 1 heme c group covalently per subunit.

In terms of biological role, low-spin monoheme cytochrome c. The protein is Cytochrome c-556 of Agrobacterium fabrum (strain C58 / ATCC 33970) (Agrobacterium tumefaciens (strain C58)).